The following is a 308-amino-acid chain: Inactive C-alpha-formylglycine-generating enzyme 2 (308 aa).

A signal peptide spans 1-33 (MRSEFWFPSMGSLLPPVLLLWLLSCPRLQLGHA). Cys163 and Cys297 are joined by a disulfide. A glycan (N-linked (GlcNAc...) asparagine) is linked at Asn198. Ca(2+) is bound by residues Asn201, Leu202, Asp215, Phe217, Asp236, Gly239, Val241, and Glu243. Residues 281–291 (RMGNTPDSASD) are compositionally biased toward polar residues. Positions 281–308 (RMGNTPDSASDNLGFRCASSAGRPKEDL) are disordered. The Non-canonical ER retention motif motif lies at 305–308 (KEDL).

It belongs to the sulfatase-modifying factor family. In terms of assembly, homodimer and heterodimer with SUMF1.

The protein resides in the endoplasmic reticulum lumen. Lacks formylglycine generating activity and is unable to convert newly synthesized inactive sulfatases to their active form. Inhibits the activation of sulfatases by SUMF1. This chain is Inactive C-alpha-formylglycine-generating enzyme 2, found in Mus musculus (Mouse).